The following is a 151-amino-acid chain: Ribonuclease H (151 aa).

Residues 2–143 enclose the RNase H type-1 domain; sequence SDDWVEIYTD…ADLLANRGVV (142 aa). Mg(2+) is bound by residues Asp11, Glu49, Asp71, and Asp135.

It belongs to the RNase H family. Monomer. It depends on Mg(2+) as a cofactor.

It localises to the cytoplasm. The enzyme catalyses Endonucleolytic cleavage to 5'-phosphomonoester.. Endonuclease that specifically degrades the RNA of RNA-DNA hybrids. In Stutzerimonas stutzeri (strain A1501) (Pseudomonas stutzeri), this protein is Ribonuclease H.